A 1677-amino-acid polypeptide reads, in one-letter code: Vitellogenin (1677 aa).

The signal sequence occupies residues 1-8; the sequence is LTIALVGS. Residues 17–655 form the Vitellogenin domain; that stretch reads FSGSKTYQYK…NAASILPSAV (639 aa). Disordered regions lie at residues 1089–1232 and 1252–1280; these read TLRG…SEEI and FQNKRGRMSSSSSSSSSSSSQSTLNSKQD. The segment covering 1098-1122 has biased composition (low complexity); the sequence is SSSSSSSSSSSSSSSSSSSSSSQQS. Residues 1123-1145 are compositionally biased toward basic and acidic residues; that stretch reads RMEKRMEQDKLTENLERDRDHMR. The segment covering 1169 to 1196 has biased composition (low complexity); the sequence is SSSSSSSSSSSGSNSSSSSSSSSSSSSR. Asparagine 1182, asparagine 1202, asparagine 1217, and asparagine 1218 each carry an N-linked (GlcNAc...) asparagine glycan. A compositionally biased stretch (basic residues) spans 1197 to 1212; sequence SHNHRNNTRTLSKSKR. Low complexity-rich tracts occupy residues 1215–1229 and 1260–1273; these read NNNNSSSSSGSSSSS and SSSSSSSSSSSSQS. One can recognise a VWFD domain in the interval 1490 to 1675; that stretch reads SKCVAQENKF…TATEAASFCV (186 aa). 2 cysteine pairs are disulfide-bonded: cysteine 1492/cysteine 1631 and cysteine 1515/cysteine 1674. A compositionally biased stretch (basic and acidic residues) spans 1636–1649; sequence GERRKEFRMPDGRQ. The disordered stretch occupies residues 1636-1659; that stretch reads GERRKEFRMPDGRQARGPSVSPTP.

In terms of processing, phosvitin, an egg yolk storage protein, is one of the most highly phosphorylated (10%) proteins in nature. As to expression, found in liver, testis and undifferentiated gonads of estrogen-treated fish. Not detected in the brain and spleen.

Its function is as follows. Precursor of the major egg-yolk proteins that are sources of nutrients during early development of oviparous organisms. In Acipenser transmontanus (White sturgeon), this protein is Vitellogenin.